The following is a 114-amino-acid chain: T cell receptor beta variable 3-1 (114 aa).

The signal sequence occupies residues 1–21 (MGCRLLCCVVFCLLQAGPLDT). Residues 22–114 (AVSQTPKYLV…SAVYFCASSQ (93 aa)) enclose the Ig-like domain. C42 and C110 form a disulfide bridge. N76 carries an N-linked (GlcNAc...) asparagine glycan.

In terms of assembly, alpha-beta TR is a heterodimer composed of an alpha and beta chain; disulfide-linked. The alpha-beta TR is associated with the transmembrane signaling CD3 coreceptor proteins to form the TR-CD3 (TcR or TCR). The assembly of alpha-beta TR heterodimers with CD3 occurs in the endoplasmic reticulum where a single alpha-beta TR heterodimer associates with one CD3D-CD3E heterodimer, one CD3G-CD3E heterodimer and one CD247 homodimer forming a stable octameric structure. CD3D-CD3E and CD3G-CD3E heterodimers preferentially associate with TR alpha and TR beta chains, respectively. The association of the CD247 homodimer is the last step of TcR assembly in the endoplasmic reticulum and is required for transport to the cell surface.

The protein localises to the cell membrane. Functionally, v region of the variable domain of T cell receptor (TR) beta chain that participates in the antigen recognition. Alpha-beta T cell receptors are antigen specific receptors which are essential to the immune response and are present on the cell surface of T lymphocytes. Recognize peptide-major histocompatibility (MH) (pMH) complexes that are displayed by antigen presenting cells (APC), a prerequisite for efficient T cell adaptive immunity against pathogens. Binding of alpha-beta TR to pMH complex initiates TR-CD3 clustering on the cell surface and intracellular activation of LCK that phosphorylates the ITAM motifs of CD3G, CD3D, CD3E and CD247 enabling the recruitment of ZAP70. In turn ZAP70 phosphorylates LAT, which recruits numerous signaling molecules to form the LAT signalosome. The LAT signalosome propagates signal branching to three major signaling pathways, the calcium, the mitogen-activated protein kinase (MAPK) kinase and the nuclear factor NF-kappa-B (NF-kB) pathways, leading to the mobilization of transcription factors that are critical for gene expression and essential for T cell growth and differentiation. The T cell repertoire is generated in the thymus, by V-(D)-J rearrangement. This repertoire is then shaped by intrathymic selection events to generate a peripheral T cell pool of self-MH restricted, non-autoaggressive T cells. Post-thymic interaction of alpha-beta TR with the pMH complexes shapes TR structural and functional avidity. In Homo sapiens (Human), this protein is T cell receptor beta variable 3-1.